The chain runs to 29 residues: GLWKSLLKNVGKAAGKAALNAVTDMVNQA.

Expressed by the skin glands.

The protein localises to the secreted. Functionally, has antimicrobial activity. This Phasmahyla jandaia (Jandaia leaf frog) protein is Dermaseptin-J8.